The primary structure comprises 287 residues: Probable prolyl 4-hydroxylase 3 (287 aa).

Over 1–16 (MAKLRHSRFQARKWST) the chain is Cytoplasmic. The helical; Signal-anchor for type II membrane protein transmembrane segment at 17-37 (LMLVLFMLFMLTIVLLMLLAF) threads the bilayer. Over 38–287 (GVFSLPINND…KWMHVGEYKI (250 aa)) the chain is Lumenal. Residues 159 to 282 (HGEGLQVLHY…KWSSTKWMHV (124 aa)) form the Fe2OG dioxygenase domain. Histidine 177 and aspartate 179 together coordinate Fe cation. An N-linked (GlcNAc...) asparagine glycan is attached at asparagine 218. Histidine 263 provides a ligand contact to Fe cation. Position 273 (lysine 273) interacts with 2-oxoglutarate.

It belongs to the P4HA family. It depends on Fe(2+) as a cofactor. The cofactor is L-ascorbate.

The protein resides in the endoplasmic reticulum membrane. The enzyme catalyses L-prolyl-[collagen] + 2-oxoglutarate + O2 = trans-4-hydroxy-L-prolyl-[collagen] + succinate + CO2. Its function is as follows. Catalyzes the post-translational formation of 4-hydroxyproline in -Xaa-Pro-Gly- sequences in proline-rich peptide sequences of plant glycoproteins and other proteins. Hydroxyprolines are important constituent of many plant cell wall glycoproteins such as extensins, hydroxyproline-rich glycoproteins, lectins and arabinogalactan proteins. This chain is Probable prolyl 4-hydroxylase 3, found in Arabidopsis thaliana (Mouse-ear cress).